The sequence spans 469 residues: RuvB-like helicase 2 (469 aa).

73–80 is a binding site for ATP; that stretch reads GEPGTGKT.

The protein belongs to the RuvB family. As to quaternary structure, forms homohexameric rings. May form a dodecamer with rvb1 made of two stacked hexameric rings. Component of the chromatin remodeling Ino80 complex. Component of the RNA polymerase II holoenzyme complex.

The protein localises to the nucleus. It carries out the reaction ATP + H2O = ADP + phosphate + H(+). In terms of biological role, has double-stranded DNA-stimulated ATPase and ATP-dependent DNA helicase (5' to 3') activity suggesting a role in nuclear processes such as recombination and transcription. Its function is as follows. Proposed core component of the chromatin remodeling Ino80 complex which is involved in transcriptional regulation, DNA replication and probably DNA repair. The chain is RuvB-like helicase 2 (rvb2) from Dictyostelium discoideum (Social amoeba).